Reading from the N-terminus, the 117-residue chain is Small ribosomal subunit protein uS17 (117 aa).

Residues 97–117 (AEGLAAAHAGEPETESAATDA) are disordered.

Belongs to the universal ribosomal protein uS17 family. In terms of assembly, part of the 30S ribosomal subunit.

Its function is as follows. One of the primary rRNA binding proteins, it binds specifically to the 5'-end of 16S ribosomal RNA. The polypeptide is Small ribosomal subunit protein uS17 (Rhodopirellula baltica (strain DSM 10527 / NCIMB 13988 / SH1)).